A 217-amino-acid polypeptide reads, in one-letter code: Adenylate kinase (217 aa).

10 to 15 (GAGKGT) contributes to the ATP binding site. The interval 30–59 (STGDIFRKNVADDTPLGRLAKQYMDAGDLV) is NMP. AMP-binding positions include T31, R36, 57–59 (DLV), 85–88 (GFPR), and Q92. The LID stretch occupies residues 126–163 (GRRTCADCAHVWHVTYDPPTVDGVCDLCGGKLFQREDD). R127 serves as a coordination point for ATP. Zn(2+) is bound by residues C130, C133, C150, and C153. 2 residues coordinate AMP: R160 and R171. G199 provides a ligand contact to ATP.

Belongs to the adenylate kinase family. As to quaternary structure, monomer.

Its subcellular location is the cytoplasm. It carries out the reaction AMP + ATP = 2 ADP. It participates in purine metabolism; AMP biosynthesis via salvage pathway; AMP from ADP: step 1/1. Functionally, catalyzes the reversible transfer of the terminal phosphate group between ATP and AMP. Plays an important role in cellular energy homeostasis and in adenine nucleotide metabolism. This chain is Adenylate kinase, found in Acidothermus cellulolyticus (strain ATCC 43068 / DSM 8971 / 11B).